We begin with the raw amino-acid sequence, 206 residues long: Ribosomal RNA small subunit methyltransferase G (206 aa).

S-adenosyl-L-methionine is bound by residues Gly74, Leu79, 125 to 126, and Arg140; that span reads VE.

It belongs to the methyltransferase superfamily. RNA methyltransferase RsmG family.

The protein localises to the cytoplasm. It carries out the reaction guanosine(527) in 16S rRNA + S-adenosyl-L-methionine = N(7)-methylguanosine(527) in 16S rRNA + S-adenosyl-L-homocysteine. Functionally, specifically methylates the N7 position of guanine in position 527 of 16S rRNA. The protein is Ribosomal RNA small subunit methyltransferase G of Shewanella sp. (strain MR-4).